A 296-amino-acid chain; its full sequence is Complex I intermediate-associated protein 30, mitochondrial (296 aa).

The transit peptide at 1–29 (MNSLLRQGLRLGCCLPAVQQQIHTTAVHR) directs the protein to the mitochondrion.

The protein belongs to the CIA30 family. Associates with mitochondrial complex I assembly intermediates during its biogenesis.

It is found in the mitochondrion. Its function is as follows. Chaperone protein involved in the assembly of the mitochondrial NADH:ubiquinone oxidoreductase complex (complex I). The polypeptide is Complex I intermediate-associated protein 30, mitochondrial (Drosophila melanogaster (Fruit fly)).